The following is a 520-amino-acid chain: MKNRRYEVEILQIEGIYQSDPTTIFNQLCNKKKCTLLLESAEIDKKHALESMIIIDSALRISSLDNIVTIEALTENGKSLLFKLDLLLPLTVKNVLFENSRRLIFPFINHEIDEDKKLRSVSIFDTFRLLIKTMKIPKNLTKSMFFGGLFSYDLVNNFEKLPILNRNQKCPDLCFYLAETLLILDHKKKNCIIQSSLFNRKSSEKNRLKKNLQEIKTKLTQNVPKIEHRKIDQISLKCNLTDKEYIKIIKKMKQSIKKGDIFQVVPSRKFYLPCISSLSAYQRLKQSNPSPYMFFMQDSDFTLFGASPESSLKYDSKSKKIEIYPIAGTRPRGKTENGLIDLDLDSKIELEMRMNEKELSEHLMLVDLARNDLARICEPGSRYVASLTKVDRYSCVMHLVSKIVGRLKSNLDIFHAYCACMNMGTLTGAPKIKAMELISKFEKERRGSYGGSIGYFTESNNFDTCIIIRSAYVENNLATVQAGAGIVLDSVPQEEANESRNKAQAVIQAIIYAHSSREVV.

Residues S40 and 291–293 (PYM) each bind L-tryptophan. Residue 328–329 (GT) coordinates chorismate. Mg(2+) is bound at residue E361. Residues Y449, R469, 483 to 485 (GAG), and G485 each bind chorismate. Position 498 (E498) interacts with Mg(2+).

Belongs to the anthranilate synthase component I family. As to quaternary structure, heterotetramer consisting of two non-identical subunits: a beta subunit (TrpG) and a large alpha subunit (TrpE). It depends on Mg(2+) as a cofactor.

It catalyses the reaction chorismate + L-glutamine = anthranilate + pyruvate + L-glutamate + H(+). It functions in the pathway amino-acid biosynthesis; L-tryptophan biosynthesis; L-tryptophan from chorismate: step 1/5. Feedback inhibited by tryptophan. Its function is as follows. Part of a heterotetrameric complex that catalyzes the two-step biosynthesis of anthranilate, an intermediate in the biosynthesis of L-tryptophan. In the first step, the glutamine-binding beta subunit (TrpG) of anthranilate synthase (AS) provides the glutamine amidotransferase activity which generates ammonia as a substrate that, along with chorismate, is used in the second step, catalyzed by the large alpha subunit of AS (TrpE) to produce anthranilate. In the absence of TrpG, TrpE can synthesize anthranilate directly from chorismate and high concentrations of ammonia. The sequence is that of Anthranilate synthase component 1 (trpE) from Buchnera aphidicola subsp. Pemphigus spyrothecae.